The sequence spans 354 residues: Guanine nucleotide-binding protein subunit alpha-14 (354 aa).

The 322-residue stretch at 33–354 folds into the G-alpha domain; it reads RELKLLLLGT…QLNLREFNLV (322 aa). The G1 motif stretch occupies residues 36–49; it reads KLLLLGTGESGKST. Residues 41–48, 175–181, 200–204, 269–272, and A326 each bind GTP; these read GTGESGKS, LRVRVPT, DVGGQ, and NKKD. S48 and T181 together coordinate Mg(2+). The G2 motif stretch occupies residues 173 to 181; it reads DVLRVRVPT. The G3 motif stretch occupies residues 196–205; it reads FRMVDVGGQR. Positions 265 to 272 are G4 motif; that stretch reads ILFLNKKD. Residues 324-329 form a G5 motif region; it reads TCATDT.

This sequence belongs to the G-alpha family. G(q) subfamily. G proteins are composed of 3 units; alpha, beta and gamma. The alpha chain contains the guanine nucleotide binding site.

Its function is as follows. Guanine nucleotide-binding proteins (G proteins) are involved as modulators or transducers in various transmembrane signaling systems. Acts as an activator of phospholipase C. Mediates responses to trypsin. The polypeptide is Guanine nucleotide-binding protein subunit alpha-14 (gna14) (Xenopus laevis (African clawed frog)).